A 210-amino-acid polypeptide reads, in one-letter code: Outer-membrane lipoprotein carrier protein (210 aa).

Positions 1–26 (MHMIRRAAGALAVFAVAALAAAPAWA) are cleaved as a signal peptide.

The protein belongs to the LolA family. As to quaternary structure, monomer.

The protein resides in the periplasm. Functionally, participates in the translocation of lipoproteins from the inner membrane to the outer membrane. Only forms a complex with a lipoprotein if the residue after the N-terminal Cys is not an aspartate (The Asp acts as a targeting signal to indicate that the lipoprotein should stay in the inner membrane). This is Outer-membrane lipoprotein carrier protein from Bordetella pertussis (strain Tohama I / ATCC BAA-589 / NCTC 13251).